A 101-amino-acid chain; its full sequence is Putative membrane protein insertion efficiency factor (101 aa).

It belongs to the UPF0161 family.

Its subcellular location is the cell membrane. Its function is as follows. Could be involved in insertion of integral membrane proteins into the membrane. The polypeptide is Putative membrane protein insertion efficiency factor (Lacticaseibacillus casei (strain BL23) (Lactobacillus casei)).